An 89-amino-acid chain; its full sequence is Small ribosomal subunit protein uS15 (89 aa).

This sequence belongs to the universal ribosomal protein uS15 family. Part of the 30S ribosomal subunit. Forms a bridge to the 50S subunit in the 70S ribosome, contacting the 23S rRNA.

One of the primary rRNA binding proteins, it binds directly to 16S rRNA where it helps nucleate assembly of the platform of the 30S subunit by binding and bridging several RNA helices of the 16S rRNA. Its function is as follows. Forms an intersubunit bridge (bridge B4) with the 23S rRNA of the 50S subunit in the ribosome. This chain is Small ribosomal subunit protein uS15, found in Chlorobaculum tepidum (strain ATCC 49652 / DSM 12025 / NBRC 103806 / TLS) (Chlorobium tepidum).